The chain runs to 271 residues: 3-methyl-2-oxobutanoate hydroxymethyltransferase (271 aa).

Mg(2+) contacts are provided by Asp50 and Asp89. Residues Asp50 to Ser51, Asp89, and Lys118 each bind 3-methyl-2-oxobutanoate. Glu120 is a Mg(2+) binding site. Residue Glu187 is the Proton acceptor of the active site.

The protein belongs to the PanB family. Homodecamer; pentamer of dimers. Mg(2+) is required as a cofactor.

Its subcellular location is the cytoplasm. It catalyses the reaction 3-methyl-2-oxobutanoate + (6R)-5,10-methylene-5,6,7,8-tetrahydrofolate + H2O = 2-dehydropantoate + (6S)-5,6,7,8-tetrahydrofolate. Its pathway is cofactor biosynthesis; (R)-pantothenate biosynthesis; (R)-pantoate from 3-methyl-2-oxobutanoate: step 1/2. Catalyzes the reversible reaction in which hydroxymethyl group from 5,10-methylenetetrahydrofolate is transferred onto alpha-ketoisovalerate to form ketopantoate. This chain is 3-methyl-2-oxobutanoate hydroxymethyltransferase, found in Campylobacter concisus (strain 13826).